The sequence spans 296 residues: Phosphatidylglycerol--prolipoprotein diacylglyceryl transferase (296 aa).

4 consecutive transmembrane segments (helical) span residues 28–48, 72–92, 110–130, and 139–159; these read WYGL…IYLA, FALY…ILFY, GGLA…IFSW, and LTFL…AFMI. A 1,2-diacyl-sn-glycero-3-phospho-(1'-sn-glycerol) is bound at residue R160. 3 helical membrane-spanning segments follow: residues 197–217, 226–246, and 263–283; these read VQLY…FLSY, GWVT…AEFF, and GQIL…ACFL.

Belongs to the Lgt family.

Its subcellular location is the cell inner membrane. The catalysed reaction is L-cysteinyl-[prolipoprotein] + a 1,2-diacyl-sn-glycero-3-phospho-(1'-sn-glycerol) = an S-1,2-diacyl-sn-glyceryl-L-cysteinyl-[prolipoprotein] + sn-glycerol 1-phosphate + H(+). It participates in protein modification; lipoprotein biosynthesis (diacylglyceryl transfer). In terms of biological role, catalyzes the transfer of the diacylglyceryl group from phosphatidylglycerol to the sulfhydryl group of the N-terminal cysteine of a prolipoprotein, the first step in the formation of mature lipoproteins. The chain is Phosphatidylglycerol--prolipoprotein diacylglyceryl transferase from Chlamydia caviae (strain ATCC VR-813 / DSM 19441 / 03DC25 / GPIC) (Chlamydophila caviae).